The chain runs to 90 residues: Putative Fis-like DNA-binding protein (90 aa).

A DNA-binding region (H-T-H motif) is located at residues 66–85 (QSRAAALLGIHRATLRKKLK).

Belongs to the transcriptional regulatory Fis family.

The polypeptide is Putative Fis-like DNA-binding protein (Xylella fastidiosa (strain 9a5c)).